A 213-amino-acid chain; its full sequence is GTP-binding protein yptV4 (213 aa).

Residue 13-21 (GDTGVGKSC) participates in GTP binding. Positions 35–43 (HDLTIGVEF) match the Effector region motif. Residues 61-65 (DTAGQ), 119-122 (NKCD), and 149-151 (SAR) each bind GTP. Positions 194–213 (AGPQAAKPGEGDARKSSSCC) are disordered. The span at 202–213 (GEGDARKSSSCC) shows a compositional bias: basic and acidic residues. 2 S-geranylgeranyl cysteine lipidation sites follow: C212 and C213.

It belongs to the small GTPase superfamily. Rab family.

It is found in the cell membrane. Its function is as follows. Protein transport. Probably involved in vesicular traffic. This is GTP-binding protein yptV4 (YPTV4) from Volvox carteri (Green alga).